Reading from the N-terminus, the 377-residue chain is Putative glutamate--cysteine ligase 2 (377 aa).

Belongs to the glutamate--cysteine ligase type 2 family. YbdK subfamily.

It catalyses the reaction L-cysteine + L-glutamate + ATP = gamma-L-glutamyl-L-cysteine + ADP + phosphate + H(+). ATP-dependent carboxylate-amine ligase which exhibits weak glutamate--cysteine ligase activity. In Ralstonia pickettii (strain 12J), this protein is Putative glutamate--cysteine ligase 2.